The primary structure comprises 603 residues: MDLGGGVGVVMAAVDGGGGGELGGGGLLGSRLMKHGRGNAGDQEHEWRPPAKQARGGDASSAAAAVAAAAAVSEAVKVAAPFLLGASCSPGHGGEQMLSFSSSASSCSSGGGGAAVAAAAAAGGAMPLYYGTPASCSGLSSVSLSSSMQGAMARVRGPFTPSQWIELEHQALIYKYLAANSPVPHSLLIPIRRSLTSPYSPAYFGSSTLGWGSFQLGYSGSADPEPGRCRRTDGKKWRCSRDAVADQKYCERHMNRGRHRSRKHVEGQPGHAAKAMPAAVAAAAASATQPSAPAAHSGGAVAGLAINHQHQQMKNYAANTANPCSLQYSRDLANKHNESEQVQDSDSLSMLTSISTRNTGSLFPFSKQHNPFEVSNSRPDFGLVSPDSLMSSPHSSLENVNLLTSQSLNEQQSSVSLQHFVDWPRTPAQGALAWPDAEDMQAQRSQLSISAPMASSDLSSASTSPIHEKLMLSPLKLSREYSPIGLGFAANRDEVNQGEANWMPMFRDSLMGGPLGEVLTKNNNMEARNCLSESLNLLNDGWDSSSGFDSSPVGVLQKTTFGSVSSSTGSSPRLENHSVYDGNSNLRDDLGSVVVNHPSIRLV.

Residues 34-58 (KHGRGNAGDQEHEWRPPAKQARGGD) form a disordered region. Residues 158-193 (PFTPSQWIELEHQALIYKYLAANSPVPHSLLIPIRR) form the QLQ domain. In terms of domain architecture, WRC spans 223–267 (DPEPGRCRRTDGKKWRCSRDAVADQKYCERHMNRGRHRSRKHVEG). 2 short sequence motifs (bipartite nuclear localization signal) span residues 228 to 238 (RCRRTDGKKWR) and 256 to 263 (RGRHRSRK). The span at 561–571 (FGSVSSSTGSS) shows a compositional bias: low complexity. A disordered region spans residues 561 to 582 (FGSVSSSTGSSPRLENHSVYDG).

It belongs to the GRF family.

Its subcellular location is the nucleus. Functionally, transcription activator that plays a regulatory role in gibberellin-induced stem elongation. This Oryza sativa subsp. japonica (Rice) protein is Growth-regulating factor 6 (GRF6).